The chain runs to 2312 residues: Protein Ycf2 (2312 aa).

Disordered stretches follow at residues 170–191, 223–253, and 942–1009; these read SSQL…GTED, TEIE…EMNN, and KRKK…KRKE. Positions 232–242 are enriched in low complexity; sequence KGLSGSSSKSR. 2 stretches are compositionally biased toward basic and acidic residues: residues 243 to 252 and 950 to 1007; these read LFTEGEKEMN and KRKE…PEKR. 1439–1446 serves as a coordination point for ATP; the sequence is GSIGSGRS. Disordered regions lie at residues 1513–1532, 1857–1983, and 2050–2166; these read YEDR…YEPG, LVGS…LLRP, and PAEE…DGFS. The segment covering 1863 to 1963 has biased composition (acidic residues); it reads TEEEVEGTEE…GEGTEDEEVE (101 aa). Positions 1964–1976 are enriched in basic and acidic residues; that stretch reads GTEKDSSQFDNDR. Acidic residues-rich tracts occupy residues 2050–2067 and 2074–2149; these read PAEE…EALE and GEEE…ENDS.

The protein belongs to the Ycf2 family.

The protein localises to the plastid. Its subcellular location is the chloroplast stroma. Probable ATPase of unknown function. Its presence in a non-photosynthetic plant (Epifagus virginiana) and experiments in tobacco indicate that it has an essential function which is probably not related to photosynthesis. The protein is Protein Ycf2 of Oenothera parviflora (Small-flowered evening primrose).